The following is a 311-amino-acid chain: MSVALRSFAETSPRLTHLQRLEAESIHIMRETVAETENPVMLYSIGKDSSVLLHLALKAFAPGRLPFPLLHIDTTWKFREMIAFRDRRAKELGLDLLVYTNPDGLARGIGPVSHGSEVHTDVMKTQALRQALDKHRFDAAFGGARRDEEASRAKERVVSLRTAQHRWDPKRQRAEPWHLYNLKKRRGESLRVFPLSNWTELDIWLYIERENIPIVPLYYAAERPVVRREGQLIMVDDARLPLEPGETPELRKVRFRTLGCYPLTGAVESEAATLPEIIGETLAARTSERQGRVIDKDGAGAMERKKQEGYF.

This sequence belongs to the PAPS reductase family. CysD subfamily. Heterodimer composed of CysD, the smaller subunit, and CysN.

The enzyme catalyses sulfate + ATP + H(+) = adenosine 5'-phosphosulfate + diphosphate. Its pathway is sulfur metabolism; hydrogen sulfide biosynthesis; sulfite from sulfate: step 1/3. In terms of biological role, with CysN forms the ATP sulfurylase (ATPS) that catalyzes the adenylation of sulfate producing adenosine 5'-phosphosulfate (APS) and diphosphate, the first enzymatic step in sulfur assimilation pathway. APS synthesis involves the formation of a high-energy phosphoric-sulfuric acid anhydride bond driven by GTP hydrolysis by CysN coupled to ATP hydrolysis by CysD. The sequence is that of Sulfate adenylyltransferase subunit 2 from Methylobacterium sp. (strain 4-46).